A 101-amino-acid chain; its full sequence is Integration host factor subunit beta (101 aa).

The disordered stretch occupies residues 62 to 84 (RNPKTGESVALPGKHVPHFKPGK).

It belongs to the bacterial histone-like protein family. As to quaternary structure, heterodimer of an alpha and a beta chain.

In terms of biological role, this protein is one of the two subunits of integration host factor, a specific DNA-binding protein that functions in genetic recombination as well as in transcriptional and translational control. This is Integration host factor subunit beta from Stenotrophomonas maltophilia (strain K279a).